Reading from the N-terminus, the 274-residue chain is Penicillin-insensitive murein endopeptidase (274 aa).

The first 19 residues, M1 to A19, serve as a signal peptide directing secretion. 3 disulfides stabilise this stretch: C44-C265, C187-C235, and C216-C223. Positions 110, 113, 120, 147, 150, and 211 each coordinate Zn(2+). The segment at D225–L274 is disordered.

It belongs to the peptidase M74 family. In terms of assembly, dimer. The cofactor is Zn(2+).

Its subcellular location is the periplasm. Murein endopeptidase that cleaves the D-alanyl-meso-2,6-diamino-pimelyl amide bond that connects peptidoglycan strands. Likely plays a role in the removal of murein from the sacculus. The sequence is that of Penicillin-insensitive murein endopeptidase from Salmonella agona (strain SL483).